The following is a 99-amino-acid chain: Large ribosomal subunit protein uL23 (99 aa).

Belongs to the universal ribosomal protein uL23 family. As to quaternary structure, part of the 50S ribosomal subunit. Contacts protein L29, and trigger factor when it is bound to the ribosome.

Its function is as follows. One of the early assembly proteins it binds 23S rRNA. One of the proteins that surrounds the polypeptide exit tunnel on the outside of the ribosome. Forms the main docking site for trigger factor binding to the ribosome. This is Large ribosomal subunit protein uL23 from Rhodopseudomonas palustris (strain HaA2).